Consider the following 96-residue polypeptide: MDIKSNSFFYIFISVVLLLIAILQYDLWFSNTGFIKYQALKKSVISQQKEVKHKSQTNVQLYSEVVSLRQNSEVLESLARENMGLIKQGEVFYSVK.

The Cytoplasmic segment spans residues 1 to 11 (MDIKSNSFFYI). Residues 12-29 (FISVVLLLIAILQYDLWF) traverse the membrane as a helical segment. The Periplasmic portion of the chain corresponds to 30 to 96 (SNTGFIKYQA…KQGEVFYSVK (67 aa)).

This sequence belongs to the FtsB family. As to quaternary structure, part of a complex composed of FtsB, FtsL and FtsQ.

It localises to the cell inner membrane. Functionally, essential cell division protein. May link together the upstream cell division proteins, which are predominantly cytoplasmic, with the downstream cell division proteins, which are predominantly periplasmic. The chain is Cell division protein FtsB from Francisella tularensis subsp. tularensis (strain SCHU S4 / Schu 4).